The sequence spans 52 residues: Large ribosomal subunit protein bL33 (52 aa).

It belongs to the bacterial ribosomal protein bL33 family.

In Anaeromyxobacter dehalogenans (strain 2CP-C), this protein is Large ribosomal subunit protein bL33.